The following is a 403-amino-acid chain: UPF0284 protein PMT_1350 (403 aa).

Belongs to the UPF0284 family.

This chain is UPF0284 protein PMT_1350, found in Prochlorococcus marinus (strain MIT 9313).